A 205-amino-acid chain; its full sequence is Large ribosomal subunit protein uL18 (205 aa).

It belongs to the universal ribosomal protein uL18 family. In terms of assembly, part of the 50S ribosomal subunit. Contacts the 5S and 23S rRNAs.

Its function is as follows. This is one of the proteins that bind and probably mediate the attachment of the 5S RNA into the large ribosomal subunit, where it forms part of the central protuberance. This Haloquadratum walsbyi (strain DSM 16790 / HBSQ001) protein is Large ribosomal subunit protein uL18.